The chain runs to 255 residues: Imidazole glycerol phosphate synthase subunit HisF (255 aa).

Catalysis depends on residues D11 and D130.

This sequence belongs to the HisA/HisF family. Heterodimer of HisH and HisF.

The protein localises to the cytoplasm. The catalysed reaction is 5-[(5-phospho-1-deoxy-D-ribulos-1-ylimino)methylamino]-1-(5-phospho-beta-D-ribosyl)imidazole-4-carboxamide + L-glutamine = D-erythro-1-(imidazol-4-yl)glycerol 3-phosphate + 5-amino-1-(5-phospho-beta-D-ribosyl)imidazole-4-carboxamide + L-glutamate + H(+). Its pathway is amino-acid biosynthesis; L-histidine biosynthesis; L-histidine from 5-phospho-alpha-D-ribose 1-diphosphate: step 5/9. Its function is as follows. IGPS catalyzes the conversion of PRFAR and glutamine to IGP, AICAR and glutamate. The HisF subunit catalyzes the cyclization activity that produces IGP and AICAR from PRFAR using the ammonia provided by the HisH subunit. The chain is Imidazole glycerol phosphate synthase subunit HisF from Rhodopseudomonas palustris (strain HaA2).